We begin with the raw amino-acid sequence, 386 residues long: S-adenosylmethionine synthase (386 aa).

Histidine 17 contacts ATP. Residue aspartate 19 participates in Mg(2+) binding. A K(+)-binding site is contributed by glutamate 45. Positions 58 and 101 each coordinate L-methionine. The flexible loop stretch occupies residues 101–111 (QSPDISQGVTE). ATP-binding positions include 168–170 (DAK), aspartate 242, 248–249 (RK), alanine 265, and lysine 269. Aspartate 242 is an L-methionine binding site. L-methionine is bound at residue lysine 273.

This sequence belongs to the AdoMet synthase family. Homotetramer; dimer of dimers. Requires Mg(2+) as cofactor. The cofactor is K(+).

The protein resides in the cytoplasm. It catalyses the reaction L-methionine + ATP + H2O = S-adenosyl-L-methionine + phosphate + diphosphate. The protein operates within amino-acid biosynthesis; S-adenosyl-L-methionine biosynthesis; S-adenosyl-L-methionine from L-methionine: step 1/1. In terms of biological role, catalyzes the formation of S-adenosylmethionine (AdoMet) from methionine and ATP. The overall synthetic reaction is composed of two sequential steps, AdoMet formation and the subsequent tripolyphosphate hydrolysis which occurs prior to release of AdoMet from the enzyme. This is S-adenosylmethionine synthase from Leptospira interrogans serogroup Icterohaemorrhagiae serovar copenhageni (strain Fiocruz L1-130).